We begin with the raw amino-acid sequence, 349 residues long: Galactose-1-phosphate uridylyltransferase (349 aa).

29-32 (RAKR) contributes to the UDP-alpha-D-glucose binding site. Residues C53 and C56 each contribute to the Zn(2+) site. A UDP-alpha-D-glucose-binding site is contributed by 78–79 (ND). A Zn(2+)-binding site is contributed by H116. Residues N154 and 160–162 (GCS) contribute to the UDP-alpha-D-glucose site. H165 contributes to the Zn(2+) binding site. Residue H167 is the Tele-UMP-histidine intermediate of the active site. Q169 is a binding site for UDP-alpha-D-glucose. Positions 183, 282, 297, and 299 each coordinate Fe cation. Residues 312 to 313 (KF), 317 to 318 (YE), and Q324 each bind UDP-alpha-D-glucose.

This sequence belongs to the galactose-1-phosphate uridylyltransferase type 1 family. Zn(2+) serves as cofactor.

The catalysed reaction is alpha-D-galactose 1-phosphate + UDP-alpha-D-glucose = alpha-D-glucose 1-phosphate + UDP-alpha-D-galactose. The protein operates within carbohydrate metabolism; galactose metabolism. The protein is Galactose-1-phosphate uridylyltransferase (galT) of Haemophilus influenzae (strain ATCC 51907 / DSM 11121 / KW20 / Rd).